The sequence spans 102 residues: ATP synthase subunit c (102 aa).

2 helical membrane-spanning segments follow: residues isoleucine 34–phenylalanine 54 and alanine 80–alanine 100.

This sequence belongs to the ATPase C chain family. As to quaternary structure, F-type ATPases have 2 components, F(1) - the catalytic core - and F(0) - the membrane proton channel. F(1) has five subunits: alpha(3), beta(3), gamma(1), delta(1), epsilon(1). F(0) has three main subunits: a(1), b(2) and c(10-14). The alpha and beta chains form an alternating ring which encloses part of the gamma chain. F(1) is attached to F(0) by a central stalk formed by the gamma and epsilon chains, while a peripheral stalk is formed by the delta and b chains.

It localises to the cell membrane. In terms of biological role, f(1)F(0) ATP synthase produces ATP from ADP in the presence of a proton or sodium gradient. F-type ATPases consist of two structural domains, F(1) containing the extramembraneous catalytic core and F(0) containing the membrane proton channel, linked together by a central stalk and a peripheral stalk. During catalysis, ATP synthesis in the catalytic domain of F(1) is coupled via a rotary mechanism of the central stalk subunits to proton translocation. Key component of the F(0) channel; it plays a direct role in translocation across the membrane. A homomeric c-ring of between 10-14 subunits forms the central stalk rotor element with the F(1) delta and epsilon subunits. The polypeptide is ATP synthase subunit c (Mycoplasma genitalium (strain ATCC 33530 / DSM 19775 / NCTC 10195 / G37) (Mycoplasmoides genitalium)).